Here is a 284-residue protein sequence, read N- to C-terminus: MTYPGILLKKQQLMARKELGQNFLSDPNAARMIVTKAGISDQDRVLEIGPGLGALTIPAAKLARDLVAVEKDTRLAGILMEELKRESIENVELINNDILHQDLNTLFRGEKIIVIGNLPYNISSQVLFMLVENRHLIKRAVLMFQKELTERISASPGGRDYGRLSVVMQYCSTVKKIADLPPHLFFPKPAVDSRVIEVNFFETTPYSGERERFLFKVIKAAFSKRRKTLRNSLAGGELDIDTKVSAKILETAEIDPVRRAETLSVEEYSRLSDALWSMHGSEEV.

The S-adenosyl-L-methionine site is built by N22, L24, G49, E70, D97, and N117.

It belongs to the class I-like SAM-binding methyltransferase superfamily. rRNA adenine N(6)-methyltransferase family. RsmA subfamily.

It is found in the cytoplasm. The enzyme catalyses adenosine(1518)/adenosine(1519) in 16S rRNA + 4 S-adenosyl-L-methionine = N(6)-dimethyladenosine(1518)/N(6)-dimethyladenosine(1519) in 16S rRNA + 4 S-adenosyl-L-homocysteine + 4 H(+). In terms of biological role, specifically dimethylates two adjacent adenosines (A1518 and A1519) in the loop of a conserved hairpin near the 3'-end of 16S rRNA in the 30S particle. May play a critical role in biogenesis of 30S subunits. This Desulforapulum autotrophicum (strain ATCC 43914 / DSM 3382 / VKM B-1955 / HRM2) (Desulfobacterium autotrophicum) protein is Ribosomal RNA small subunit methyltransferase A.